A 449-amino-acid chain; its full sequence is Phosphoglucosamine mutase (449 aa).

Ser104 serves as the catalytic Phosphoserine intermediate. Mg(2+) contacts are provided by Ser104, Asp243, Asp245, and Asp247. Ser104 is modified (phosphoserine).

It belongs to the phosphohexose mutase family. It depends on Mg(2+) as a cofactor. Post-translationally, activated by phosphorylation.

It catalyses the reaction alpha-D-glucosamine 1-phosphate = D-glucosamine 6-phosphate. Functionally, catalyzes the conversion of glucosamine-6-phosphate to glucosamine-1-phosphate. In Xanthomonas campestris pv. campestris (strain 8004), this protein is Phosphoglucosamine mutase.